Reading from the N-terminus, the 263-residue chain is Protein phosphatase type 2A regulatory subunit RTS3 (263 aa).

2 disordered regions span residues 1–62 (MIAT…AQRR) and 149–176 (LPLT…ISNG). Residues 46–61 (LSTSSSPSSSPMSAQR) show a composition bias toward low complexity. Phosphoserine occurs at positions 172, 192, 214, and 238.

Its subcellular location is the cytoplasm. The protein localises to the nucleus. May be a component of a protein phosphatase type 2A (PP2A) complex. Negatively regulates SIT4 phosphatase, a modulators of caffeine sensitivity. The polypeptide is Protein phosphatase type 2A regulatory subunit RTS3 (RTS3) (Saccharomyces cerevisiae (strain ATCC 204508 / S288c) (Baker's yeast)).